A 364-amino-acid polypeptide reads, in one-letter code: Homeobox protein Nkx-2.3 (364 aa).

Residues 132 to 153 (GDCKAAEESERPKPRSRRKPRV) form a disordered region. Residues 135 to 144 (KAAEESERPK) show a composition bias toward basic and acidic residues. A DNA-binding region (homeobox) is located at residues 148–207 (RRKPRVLFSQAQVFELERRFKQQRYLSAPEREHLASSLKLTSTQVKIWFQNRRYKCKRQR).

Belongs to the NK-2 homeobox family.

It is found in the nucleus. Functionally, transcription factor. In Homo sapiens (Human), this protein is Homeobox protein Nkx-2.3 (NKX2-3).